Consider the following 479-residue polypeptide: Aspartyl/glutamyl-tRNA(Asn/Gln) amidotransferase subunit B (479 aa).

This sequence belongs to the GatB/GatE family. GatB subfamily. Heterotrimer of A, B and C subunits.

The catalysed reaction is L-glutamyl-tRNA(Gln) + L-glutamine + ATP + H2O = L-glutaminyl-tRNA(Gln) + L-glutamate + ADP + phosphate + H(+). The enzyme catalyses L-aspartyl-tRNA(Asn) + L-glutamine + ATP + H2O = L-asparaginyl-tRNA(Asn) + L-glutamate + ADP + phosphate + 2 H(+). Allows the formation of correctly charged Asn-tRNA(Asn) or Gln-tRNA(Gln) through the transamidation of misacylated Asp-tRNA(Asn) or Glu-tRNA(Gln) in organisms which lack either or both of asparaginyl-tRNA or glutaminyl-tRNA synthetases. The reaction takes place in the presence of glutamine and ATP through an activated phospho-Asp-tRNA(Asn) or phospho-Glu-tRNA(Gln). In Halorhodospira halophila (strain DSM 244 / SL1) (Ectothiorhodospira halophila (strain DSM 244 / SL1)), this protein is Aspartyl/glutamyl-tRNA(Asn/Gln) amidotransferase subunit B.